We begin with the raw amino-acid sequence, 238 residues long: Ion-translocating oxidoreductase complex subunit E (238 aa).

6 consecutive transmembrane segments (helical) span residues 20-40 (ALVQ…VVNA), 41-61 (LGLG…VSLI), 72-92 (PAFV…MKAF), 95-115 (ELYQ…AVLG), 130-150 (AVDG…VGAV), and 185-205 (NVIF…LIAA).

This sequence belongs to the NqrDE/RnfAE family. In terms of assembly, the complex is composed of six subunits: RnfA, RnfB, RnfC, RnfD, RnfE and RnfG.

The protein resides in the cell inner membrane. Its function is as follows. Part of a membrane-bound complex that couples electron transfer with translocation of ions across the membrane. This is Ion-translocating oxidoreductase complex subunit E from Cellvibrio japonicus (strain Ueda107) (Pseudomonas fluorescens subsp. cellulosa).